The chain runs to 313 residues: MSVVESHDIEFAAPRISEASVADYIALLKPRVMSLVIFTALVGLLLAPGYIHPVLAFTSILCIAVGAGASGALNMWYEDDIDAKMTRTANRPIPRGRVSKPEALTFGLVLSFFSVVTLGILVNWFAAALLAFTIFFYVVIYTIWLKRWTAQNIVIGGAAGALPPVVAWAAAAGSLSVEPMLLFAIIFFWTPPHFWALALFRAGDYANAGVPMLPVTAGPDATRLSILLYTIVLVAVAFAPWPLGYFDAIYGITSLALGGWMLLLTLRVYRLRHGSAALRASRSLFKFSILYLFALFAVLLLEVIVRGVIGALA.

Transmembrane regions (helical) follow at residues 35-55 (LVIF…HPVL), 56-76 (AFTS…LNMW), 98-118 (VSKP…VVTL), 120-140 (ILVN…YVVI), 153-173 (IVIG…AAAG), 180-200 (MLLF…LALF), 226-246 (ILLY…LGYF), 248-268 (AIYG…TLRV), and 285-305 (FKFS…EVIV).

It belongs to the UbiA prenyltransferase family. Protoheme IX farnesyltransferase subfamily.

Its subcellular location is the cell inner membrane. The catalysed reaction is heme b + (2E,6E)-farnesyl diphosphate + H2O = Fe(II)-heme o + diphosphate. The protein operates within porphyrin-containing compound metabolism; heme O biosynthesis; heme O from protoheme: step 1/1. Its function is as follows. Converts heme B (protoheme IX) to heme O by substitution of the vinyl group on carbon 2 of heme B porphyrin ring with a hydroxyethyl farnesyl side group. The polypeptide is Protoheme IX farnesyltransferase (Rhodopseudomonas palustris (strain BisB18)).